Reading from the N-terminus, the 1719-residue chain is MNGHSDEESVRNSSGESRSDDDSGSASGSGSGSSSGSSSDGSSSQSGSSDSESGSESGSQSESESDTSREKKQVQAKPPKADGSEFWKSSPSILAVQRSAVLKKQQQQQKAASSDSGSEEDSSSSEDSADDSSSETKKKKHKDEDWQMSGSGSVSGTGSDSESEEDGDKSSCEESESDYEPKNKVKSRKPPSRIKPKSGKKSTGQKKRQLDSSEEEEDDDEDYDKRGSRRQATVNVSYKEAEETKTDSDDLLEVCGEDVPQTEEDEFETIEKFMDSRIGRKGATGASTTIYAVEVDGDPNAGFEKSKELGEIQYLIKWKGWSHIHNTWETEETLKQQNVKGMKKLDNYKKKDQETKRWLKNASPEDVEYYNCQQELTDDLHKQYQIVERIIAHSNQKSAAGYPDYYCKWQGLPYSECSWEDGALIAKKFQARIDEYFSRNQSKTTPFKDCKVLKQRPRFVALKKQPSYIGGHESLELRDYQLNGLNWLAHSWCKGNSCILADEMGLGKTIQTISFLNYLFHEHQLYGPFLLVVPLSTLTSWQREIQTWAPQMNAVVYLGDITSRNMIRTHEWMHPQTKRLKFNILLTTYEILLKDKSFLGGLNWAFIGVDEAHRLKNDDSLLYKTLIDFKSNHRLLITGTPLQNSLKELWSLLHFIMPEKFSSWEDFEEEHGKGREYGYASLHKELEPFLLRRVKKDVEKSLPAKVEQILRMEMSALQKQYYKWILTRNYKALSKGSKGSTSGFLNIMMELKKCCNHCYLIKPPDDNEFYNKQEALQHLIRSSGKLILLDKLLIRLRERGNRVLIFSQMVRMLDILAEYLKYRQFPFQRLDGSIKGELRKQALDHFNAEGSEDFCFLLSTRAGGLGINLASADTVVIFDSDWNPQNDLQAQARAHRIGQKKQVNIYRLVTKGSVEEDILERAKKKMVLDHLVIQRMDTTGKTVLHTGSTPSSSTPFNKEELSAILKFGAEELFKEPEGEEQEPQEMDIDEILKRAETRENEPGPLTVGDELLSQFKVANFSNMDEDDIELEPERNSRNWEEIIPESQRRRIEEEERQKELEEIYMLPRMRNCAKQISFNGSEGRRSRSRRYSGSDSDSITERKRPKKRGRPRTIPRENIKGFSDAEIRRFIKSYKKFGGPLERLDAVARDAELVDKSETDLRRLGELVHNGCIKALKDNSSGQERAGGRLGKVKGPTFRISGVQVNAKLVISHEEELAPLHKSIPSDPEERKRYVIPCHTKAAHFDIDWGKEDDSNLLVGIYEYGYGSWEMIKMDPDLSLTQKILPDDPDKKPQAKQLQTRADYLIKLLNKDLARKEAQRLAGAGNSKRRKTRNKKNKMKASKIKEEIKSDSSPQPSEKSDEDDDEEDNKVNEIKSENKEKSKKIPLLDTPVHITATSEPVPISEESEELDQKTFSVCKERMRPVKAALKQLDRPEKGLSEREQLEHTRQCLIKIGDHITECLKEYTNPEQIKQWRKNLWIFVSKFTEFDARKLHKLYKHAIKKRQESQQHNDQNISSNVNTHVIRNPDVERLKETTNHDDSSRDSYSSDRHLSQYHDHHKDRHQGDAYKKSDSRKRPYSAFSNGKDHRDWDHYKQDSRYYSDSKHRKLDDHRSRDHRSNLEGNLKDSRGHSDHRSHSDHRIHSDHRSTSEYSHHKSSRDYRYHSDWQMDHRASGSGPRSPLDQRSPYGSRSPLGHRSPFEHSSDHKSTPEHTWSSRKT.

Residues 1 to 10 show a composition bias toward basic and acidic residues; sequence MNGHSDEESV. Residues 1–249 form a disordered region; sequence MNGHSDEESV…EAEETKTDSD (249 aa). The span at 34-62 shows a compositional bias: low complexity; the sequence is SSGSSSDGSSSQSGSSDSESGSESGSQSE. Positions 66–85 are enriched in basic and acidic residues; the sequence is DTSREKKQVQAKPPKADGSE. Over residues 103–116 the composition is skewed to low complexity; that stretch reads KKQQQQQKAASSDS. Residues 117–133 are compositionally biased toward acidic residues; the sequence is GSEEDSSSSEDSADDSS. Residues 149-160 show a composition bias toward low complexity; that stretch reads SGSGSVSGTGSD. The segment covering 161 to 178 has biased composition (acidic residues); it reads SESEEDGDKSSCEESESD. Residues 184-207 show a composition bias toward basic residues; the sequence is KVKSRKPPSRIKPKSGKKSTGQKK. Over residues 212–222 the composition is skewed to acidic residues; that stretch reads SSEEEEDDDED. The segment covering 239–248 has biased composition (basic and acidic residues); that stretch reads KEAEETKTDS. Chromo domains lie at 268–360 and 385–448; these read ETIE…RWLK and QIVE…TPFK. In terms of domain architecture, Helicase ATP-binding spans 489–659; it reads AHSWCKGNSC…WSLLHFIMPE (171 aa). An ATP-binding site is contributed by 502–509; it reads DEMGLGKT. The short motif at 610 to 613 is the DEAH box element; that stretch reads DEAH. The Helicase C-terminal domain maps to 788–939; it reads LLDKLLIRLR…HLVIQRMDTT (152 aa). Disordered stretches follow at residues 1076–1116, 1319–1393, and 1503–1719; these read ISFN…TIPR, QRLA…TPVH, and KKRQ…SRKT. Composition is skewed to basic residues over residues 1103–1113 and 1327–1342; these read KRPKKRGRPRT and SKRRKTRNKKNKMKAS. Residues 1369–1380 are compositionally biased toward basic and acidic residues; that stretch reads NKVNEIKSENKE. The CHD1 helical C-terminal domain (CHCT) stretch occupies residues 1410–1512; that stretch reads LDQKTFSVCK…KKRQESQQHN (103 aa). Residues 1511–1524 are compositionally biased toward polar residues; that stretch reads HNDQNISSNVNTHV. 3 stretches are compositionally biased toward basic and acidic residues: residues 1526-1576, 1585-1673, and 1698-1710; these read RNPD…DSRK, GKDH…DHRA, and SPFEHSSDHKSTP.

The protein belongs to the SNF2/RAD54 helicase family. Component of the SAGA complex. Interacts with SSRP1.

It localises to the nucleus. It is found in the chromosome. Its subcellular location is the centromere. The catalysed reaction is ATP + H2O = ADP + phosphate + H(+). Its function is as follows. ATP-dependent chromatin-remodeling factor which functions as substrate recognition component of the transcription regulatory histone acetylation (HAT) complex SAGA. Regulates polymerase II transcription. Also required for efficient transcription by RNA polymerase I, and more specifically the polymerase I transcription termination step. Regulates negatively DNA replication. Not only involved in transcription-related chromatin remodeling, but also required to maintain a specific chromatin configuration across the genome. Required for maintaining open chromatin and pluripotency in embryonic stem cells. Required for centromeric localization of CENPA. This Gallus gallus (Chicken) protein is Chromodomain-helicase-DNA-binding protein 1 (CHD1).